Reading from the N-terminus, the 629-residue chain is Probable potassium transport system protein Kup 3 (629 aa).

12 consecutive transmembrane segments (helical) span residues 20–40, 61–81, 106–126, 143–163, 171–191, 209–229, 253–273, 291–311, 343–363, 372–392, 400–420, and 425–445; these read LSLS…LYTF, VSLI…HFAL, PFII…GTIT, PSLK…LFAI, IGKA…ILGA, GLSF…GVFL, WFGL…ALVL, FLLP…QAII, IYIG…TIGF, AYGI…FIAL, IITS…FFAA, and FING…MMYI.

Belongs to the HAK/KUP transporter (TC 2.A.72) family.

The protein localises to the cell inner membrane. It catalyses the reaction K(+)(in) + H(+)(in) = K(+)(out) + H(+)(out). In terms of biological role, transport of potassium into the cell. Likely operates as a K(+):H(+) symporter. The protein is Probable potassium transport system protein Kup 3 of Legionella pneumophila subsp. pneumophila (strain Philadelphia 1 / ATCC 33152 / DSM 7513).